The following is a 259-amino-acid chain: MLTVISPAKTLDYDTPPVTERFTLPQYLDDSQALIQQLRELSPAQISELMHLSDKLAGLNAARFGSWTPDFTPANAKQALLAFKGDVYTGLDAESLAEDDFSYAQDHLRMLSGLYGLLRPLDLMQPYRLEMGTKLANARGKDLYAFWGTRISEWLNEALAEQGDDVLLNLASNEYFSAVKRSALKARVINVDFKDLKNGQYKIISFYAKKARGMMSRFVIQQRISDPEQLKQFDVQGYYYSAEQSKPDHLVFLRDHPAD.

The protein belongs to the UPF0246 family.

This chain is UPF0246 protein PputGB1_4560, found in Pseudomonas putida (strain GB-1).